Reading from the N-terminus, the 258-residue chain is Aspartate/glutamate leucyltransferase (258 aa).

The protein belongs to the R-transferase family. Bpt subfamily.

It is found in the cytoplasm. It carries out the reaction N-terminal L-glutamyl-[protein] + L-leucyl-tRNA(Leu) = N-terminal L-leucyl-L-glutamyl-[protein] + tRNA(Leu) + H(+). The enzyme catalyses N-terminal L-aspartyl-[protein] + L-leucyl-tRNA(Leu) = N-terminal L-leucyl-L-aspartyl-[protein] + tRNA(Leu) + H(+). Its function is as follows. Functions in the N-end rule pathway of protein degradation where it conjugates Leu from its aminoacyl-tRNA to the N-termini of proteins containing an N-terminal aspartate or glutamate. The polypeptide is Aspartate/glutamate leucyltransferase (Rhizobium johnstonii (strain DSM 114642 / LMG 32736 / 3841) (Rhizobium leguminosarum bv. viciae)).